The following is a 324-amino-acid chain: Nidogen-1 (324 aa).

The NIDO domain maps to 16–178 (PFLADLDTTD…GVWVFEIGSP (163 aa)). Asn97 carries N-linked (GlcNAc...) asparagine glycosylation. 2 positions are modified to sulfotyrosine: Tyr200 and Tyr205. The interval 219–259 (TQPFPSHSPRRGYPDPHNVPRTLAPSYEATERPHGIPTERT) is disordered. Residues 247–259 (ATERPHGIPTERT) show a composition bias toward basic and acidic residues. Residues 295–324 (SQQTCANNRHQCSVHAECRDYATGFCCRCV) form the EGF-like domain. 2 cysteine pairs are disulfide-bonded: Cys299-Cys312 and Cys306-Cys321.

As to quaternary structure, interacts with FBLN1. Interacts with LGALS3BP. Interacts with PLXDC1. Interacts with SVEP1. Post-translationally, N- and O-glycosylated.

It localises to the secreted. It is found in the extracellular space. The protein resides in the extracellular matrix. The protein localises to the basement membrane. In terms of biological role, sulfated glycoprotein widely distributed in basement membranes and tightly associated with laminin. Also binds to collagen IV and perlecan. It probably has a role in cell-extracellular matrix interactions. The chain is Nidogen-1 (Nid1) from Rattus norvegicus (Rat).